The sequence spans 423 residues: Glucose-1-phosphate adenylyltransferase (423 aa).

Residues tyrosine 108, glycine 173, 188 to 189, and serine 207 contribute to the alpha-D-glucose 1-phosphate site; that span reads EK.

It belongs to the bacterial/plant glucose-1-phosphate adenylyltransferase family. In terms of assembly, homotetramer.

It catalyses the reaction alpha-D-glucose 1-phosphate + ATP + H(+) = ADP-alpha-D-glucose + diphosphate. It participates in glycan biosynthesis; glycogen biosynthesis. In terms of biological role, involved in the biosynthesis of ADP-glucose, a building block required for the elongation reactions to produce glycogen. Catalyzes the reaction between ATP and alpha-D-glucose 1-phosphate (G1P) to produce pyrophosphate and ADP-Glc. This chain is Glucose-1-phosphate adenylyltransferase, found in Francisella tularensis subsp. mediasiatica (strain FSC147).